The chain runs to 485 residues: NADH-quinone oxidoreductase subunit N (485 aa).

14 consecutive transmembrane segments (helical) span residues 8–28 (LIAL…MLSI), 35–55 (FLNA…LWFV), 71–91 (GFAM…CTFA), 105–125 (FYLL…ANHL), 127–147 (ALFL…GYAF), 159–179 (YTIL…LVYA), 203–223 (LLAG…LVPF), 235–255 (PAPV…GVVM), 271–291 (IVLG…ALSQ), 297–317 (LLGY…IALQ), 326–346 (VGVY…VVSL), 373–393 (AAVM…LGFI), 408–430 (WWLV…RVAV), and 455–475 (IVVL…QPLI).

It belongs to the complex I subunit 2 family. As to quaternary structure, NDH-1 is composed of 13 different subunits. Subunits NuoA, H, J, K, L, M, N constitute the membrane sector of the complex.

It localises to the cell inner membrane. The catalysed reaction is a quinone + NADH + 5 H(+)(in) = a quinol + NAD(+) + 4 H(+)(out). NDH-1 shuttles electrons from NADH, via FMN and iron-sulfur (Fe-S) centers, to quinones in the respiratory chain. The immediate electron acceptor for the enzyme in this species is believed to be ubiquinone. Couples the redox reaction to proton translocation (for every two electrons transferred, four hydrogen ions are translocated across the cytoplasmic membrane), and thus conserves the redox energy in a proton gradient. The protein is NADH-quinone oxidoreductase subunit N of Citrobacter koseri (strain ATCC BAA-895 / CDC 4225-83 / SGSC4696).